Consider the following 141-residue polypeptide: Large ribosomal subunit protein uL14 (141 aa).

The protein belongs to the universal ribosomal protein uL14 family. As to quaternary structure, part of the 50S ribosomal subunit. Forms a cluster with proteins L3 and L24e, part of which may contact the 16S rRNA in 2 intersubunit bridges.

Functionally, binds to 23S rRNA. Forms part of two intersubunit bridges in the 70S ribosome. This Thermofilum pendens (strain DSM 2475 / Hrk 5) protein is Large ribosomal subunit protein uL14.